Consider the following 169-residue polypeptide: Small ribosomal subunit protein uS5c (169 aa).

Residues 17 to 80 (WQERVIQVRR…TDGRKNLINI (64 aa)) enclose the S5 DRBM domain.

This sequence belongs to the universal ribosomal protein uS5 family. Part of the 30S ribosomal subunit. Contacts protein S4.

Its subcellular location is the plastid. It is found in the chloroplast. In terms of biological role, with S4 and S12 plays an important role in translational accuracy. This is Small ribosomal subunit protein uS5c (rps5) from Guillardia theta (Cryptophyte).